Here is a 388-residue protein sequence, read N- to C-terminus: S-adenosylmethionine synthase (388 aa).

Histidine 16 lines the ATP pocket. Aspartate 18 contributes to the Mg(2+) binding site. Glutamate 44 is a binding site for K(+). Positions 57 and 100 each coordinate L-methionine. The tract at residues 100 to 110 (QSPEIAQGVDR) is flexible loop. ATP is bound by residues 165 to 167 (DAK), 231 to 232 (KF), aspartate 240, 246 to 247 (RK), alanine 263, and lysine 267. Aspartate 240 serves as a coordination point for L-methionine. Lysine 271 lines the L-methionine pocket.

Belongs to the AdoMet synthase family. Homotetramer; dimer of dimers. Requires Mg(2+) as cofactor. The cofactor is K(+).

It localises to the cytoplasm. The enzyme catalyses L-methionine + ATP + H2O = S-adenosyl-L-methionine + phosphate + diphosphate. It functions in the pathway amino-acid biosynthesis; S-adenosyl-L-methionine biosynthesis; S-adenosyl-L-methionine from L-methionine: step 1/1. Its function is as follows. Catalyzes the formation of S-adenosylmethionine (AdoMet) from methionine and ATP. The overall synthetic reaction is composed of two sequential steps, AdoMet formation and the subsequent tripolyphosphate hydrolysis which occurs prior to release of AdoMet from the enzyme. The polypeptide is S-adenosylmethionine synthase (Psychrobacter sp. (strain PRwf-1)).